The chain runs to 161 residues: 3-isopropylmalate dehydratase small subunit (161 aa).

This sequence belongs to the LeuD family. LeuD type 2 subfamily. Heterodimer of LeuC and LeuD.

It catalyses the reaction (2R,3S)-3-isopropylmalate = (2S)-2-isopropylmalate. It participates in amino-acid biosynthesis; L-leucine biosynthesis; L-leucine from 3-methyl-2-oxobutanoate: step 2/4. Its function is as follows. Catalyzes the isomerization between 2-isopropylmalate and 3-isopropylmalate, via the formation of 2-isopropylmaleate. The polypeptide is 3-isopropylmalate dehydratase small subunit (leuD) (Caldanaerobacter subterraneus subsp. tengcongensis (strain DSM 15242 / JCM 11007 / NBRC 100824 / MB4) (Thermoanaerobacter tengcongensis)).